Consider the following 552-residue polypeptide: Non-structural protein NS1 (552 aa).

The protein belongs to the orbivirus non-structural protein NS1 family.

This is Non-structural protein NS1 (Segment-5) from Bluetongue virus 13 (isolate USA) (BTV 13).